The sequence spans 491 residues: Sucrose transport protein SUC9 (491 aa).

Positions 1–12 are enriched in basic and acidic residues; the sequence is MSDIQAKEDAAP. Residues 1–26 form a disordered region; it reads MSDIQAKEDAAPVDRQSSSSVVVPDE. Topologically, residues 1–33 are cytoplasmic; the sequence is MSDIQAKEDAAPVDRQSSSSVVVPDEPSPLRKM. At Ser17 the chain carries Phosphoserine. Residues 34-54 traverse the membrane as a helical segment; that stretch reads ISVASIAAGIQFGWALQLSLL. The Extracellular segment spans residues 55–68; it reads TPYVQLLGVPHKWS. Residues 69-89 traverse the membrane as a helical segment; sequence SFIWLCGPISGLLVQPTVGYF. The Cytoplasmic portion of the chain corresponds to 90 to 101; that stretch reads SDRCKSRFGRRR. The chain crosses the membrane as a helical span at residues 102–122; the sequence is PFIATGALLVALAVILIGFAA. Residues 123-139 lie on the Extracellular side of the membrane; that stretch reads DFGHTMGDKLDEAVKIR. A helical membrane pass occupies residues 140–160; the sequence is AVGFFVVGFWILDVANNTLQG. The Cytoplasmic segment spans residues 161–181; it reads PCRAFLGDLAAGDAKKTRTAN. Residues 182 to 202 form a helical membrane-spanning segment; the sequence is AIFSFFMAVGNVLGYAAGSYT. The Extracellular portion of the chain corresponds to 203-224; sequence NLHKIFPFTVTKACDIYCANLK. The helical transmembrane segment at 225-245 threads the bilayer; it reads SCFIISITLLIVLTIIALWYV. The Cytoplasmic segment spans residues 246 to 277; it reads EDKQWSPNADSDNEKTPFFGEIFGAFKVMKRP. Residues 278–298 form a helical membrane-spanning segment; that stretch reads MWMLLAVTALNWIAWFPFLLY. At 299–329 the chain is on the extracellular side; sequence DTDWMGREVYGGDSAGDDKMKKLYNHGIQVG. A helical transmembrane segment spans residues 330 to 350; that stretch reads SLGLMLNSIVLGVMSLVIGVI. Topologically, residues 351 to 358 are cytoplasmic; that stretch reads SKKIGAKR. Residues 359–379 form a helical membrane-spanning segment; it reads LWGAVNIILAVCLAMTVLVTK. The Extracellular portion of the chain corresponds to 380–406; sequence KAEEHRKIAGRMALPTNAIRDGALSLF. Residues 407 to 427 form a helical membrane-spanning segment; sequence AILGIPLAITFSIPFALASII. Residues 428 to 443 lie on the Cytoplasmic side of the membrane; it reads SSSSGAGQGLSLGVLN. A helical transmembrane segment spans residues 444–464; sequence MAIVIPQMIVSFGVGPIDALF. Residues 465–468 lie on the Extracellular side of the membrane; it reads GGGN. Residues 469-489 form a helical membrane-spanning segment; the sequence is LPGFVVGAIAALISSVVALTV. Residues 490 to 491 lie on the Cytoplasmic side of the membrane; it reads LP.

This sequence belongs to the glycoside-pentoside-hexuronide (GPH) cation symporter transporter (TC 2.A.2.4) family. In terms of tissue distribution, widely expressed.

The protein resides in the cell membrane. The enzyme catalyses sucrose(out) + H(+)(out) = sucrose(in) + H(+)(in). The protein operates within glycan biosynthesis; sucrose metabolism. Its activity is regulated as follows. Inhibited by protonophores (e.g. carbonyl cyanide m-chlorophenyl-hydrazone (CCCP)) and SH group inhibitors (e.g. p-chloromercuribenzene sulphonic acid (PCMBS)). Functionally, high-affinity sucrose transporter. Responsible for the transport of sucrose into the cell, with the concomitant uptake of protons (symport system). Can also transport a wide range of glucosides, such as helicin, salicin, arbutin, maltose, fraxin, esculin, uranose, alpha-methylglucoside, alpha-phenylglucoside and beta-phenylglucoside. Plays a role in flowering time transition delay. The protein is Sucrose transport protein SUC9 of Arabidopsis thaliana (Mouse-ear cress).